An 89-amino-acid chain; its full sequence is Small ribosomal subunit protein uS17 (89 aa).

This sequence belongs to the universal ribosomal protein uS17 family. In terms of assembly, part of the 30S ribosomal subunit.

Functionally, one of the primary rRNA binding proteins, it binds specifically to the 5'-end of 16S ribosomal RNA. This chain is Small ribosomal subunit protein uS17, found in Stenotrophomonas maltophilia (strain K279a).